The sequence spans 464 residues: MSVEKTNQSWGGRFSEPVDAFVARFTASVDFDKRLYRHDIMGSIAHATMLAKVGVLSDAERDAIVDGLQQIQAEIEAGSFDWRVDLEDVHMNIEARLTDRIGVTGKKLHTGRSRNDQVATDIRLWLRDEIDTILAEITRLQEGLLGLAEAEADTIMPGFTHLQTAQPVTFGHHLLAWFEMLGRDYERLVDCRKRVNRMPLGSAALAGTTYPIQREITCQLLGFDAVGGNSLDGVSDRDFAIEFCAAASLAMMHLSRFSEELVLWTSAQFQFIDLPDRFCTGSSIMPQKKNPDVPELVRGKSGRVFGALTGLLTLMKGQPLAYNKDNQEDKEPLFDAADTLRDSLRAFADMVPAIRPRREIMREAARRGFSTATDLADYLVRKGLPFRDCHEIVGHAVKYGVDSGKDLAEMSLDELRRFSEQIDADVFDVLTLEGSVNARDHIGGTAPNQVRAAVARGRQLLAQR.

The protein belongs to the lyase 1 family. Argininosuccinate lyase subfamily.

Its subcellular location is the cytoplasm. It catalyses the reaction 2-(N(omega)-L-arginino)succinate = fumarate + L-arginine. It functions in the pathway amino-acid biosynthesis; L-arginine biosynthesis; L-arginine from L-ornithine and carbamoyl phosphate: step 3/3. The chain is Argininosuccinate lyase from Pseudomonas aeruginosa (strain UCBPP-PA14).